We begin with the raw amino-acid sequence, 279 residues long: Acetyl-coenzyme A carboxylase carboxyl transferase subunit beta (279 aa).

Residues 23–279 (LWWKCEECGA…LTTLLSLMKL (257 aa)) enclose the CoA carboxyltransferase N-terminal domain. Zn(2+) is bound by residues cysteine 27, cysteine 30, cysteine 46, and cysteine 49. The C4-type zinc finger occupies 27–49 (CEECGAALHKKQMEASDHTCPQC).

It belongs to the AccD/PCCB family. In terms of assembly, acetyl-CoA carboxylase is a heterohexamer composed of biotin carboxyl carrier protein (AccB), biotin carboxylase (AccC) and two subunits each of ACCase subunit alpha (AccA) and ACCase subunit beta (AccD). It depends on Zn(2+) as a cofactor.

It localises to the cytoplasm. The enzyme catalyses N(6)-carboxybiotinyl-L-lysyl-[protein] + acetyl-CoA = N(6)-biotinyl-L-lysyl-[protein] + malonyl-CoA. The protein operates within lipid metabolism; malonyl-CoA biosynthesis; malonyl-CoA from acetyl-CoA: step 1/1. In terms of biological role, component of the acetyl coenzyme A carboxylase (ACC) complex. Biotin carboxylase (BC) catalyzes the carboxylation of biotin on its carrier protein (BCCP) and then the CO(2) group is transferred by the transcarboxylase to acetyl-CoA to form malonyl-CoA. This is Acetyl-coenzyme A carboxylase carboxyl transferase subunit beta from Chlorobium chlorochromatii (strain CaD3).